The following is a 74-amino-acid chain: Antimicrobial peptide AcrAP2 (74 aa).

A signal peptide spans 1–22 (MEIKYLLTVFLVLLIVSDHCQA). K40 carries the post-translational modification Lysine amide. The propeptide occupies 46–74 (NLDGQIDRFRNFRKRDAELEELLSKLPIY).

The protein belongs to the non-disulfide-bridged peptide (NDBP) superfamily. Short antimicrobial peptide (group 4) family. As to expression, expressed by the venom gland.

It localises to the secreted. The protein resides in the target cell membrane. Functionally, has antimicrobial activity against the Gram-positive bacteria S.aureus (MIC=8 uM) and the yeast C.albicans (MIC=16 uM). Causes hemolysis on horse erythrocytes (64 uM for 100% hemolysis). Minimum bactericidal concentrations have also been tested against S.aureus and is four-fold higher (MBC=32 uM). This Androctonus crassicauda (Arabian fat-tailed scorpion) protein is Antimicrobial peptide AcrAP2.